The primary structure comprises 304 residues: Glycine--tRNA ligase alpha subunit (304 aa).

The protein belongs to the class-II aminoacyl-tRNA synthetase family. In terms of assembly, tetramer of two alpha and two beta subunits.

Its subcellular location is the cytoplasm. The enzyme catalyses tRNA(Gly) + glycine + ATP = glycyl-tRNA(Gly) + AMP + diphosphate. The polypeptide is Glycine--tRNA ligase alpha subunit (Pectobacterium carotovorum subsp. carotovorum (strain PC1)).